Here is a 63-residue protein sequence, read N- to C-terminus: Protein Wfdc21 (63 aa).

An N-terminal signal peptide occupies residues 1 to 24 (MKLGAFLLLVSLITLSLEVQELQA). The 39-residue stretch at 25–63 (AVRPLQLLGTCAELCRGDWDCGPEEQCVSIGCSHICTTN) folds into the WAP; atypical domain. 3 disulfides stabilise this stretch: Cys35–Cys56, Cys39–Cys51, and Cys45–Cys60.

Predominantly expressed in white adipose tissue and liver.

The protein resides in the secreted. May promote activation of the metalloproteinase MMP2. This is Protein Wfdc21 from Mus musculus (Mouse).